Consider the following 154-residue polypeptide: SsrA-binding protein (154 aa).

The protein belongs to the SmpB family.

Its subcellular location is the cytoplasm. In terms of biological role, required for rescue of stalled ribosomes mediated by trans-translation. Binds to transfer-messenger RNA (tmRNA), required for stable association of tmRNA with ribosomes. tmRNA and SmpB together mimic tRNA shape, replacing the anticodon stem-loop with SmpB. tmRNA is encoded by the ssrA gene; the 2 termini fold to resemble tRNA(Ala) and it encodes a 'tag peptide', a short internal open reading frame. During trans-translation Ala-aminoacylated tmRNA acts like a tRNA, entering the A-site of stalled ribosomes, displacing the stalled mRNA. The ribosome then switches to translate the ORF on the tmRNA; the nascent peptide is terminated with the 'tag peptide' encoded by the tmRNA and targeted for degradation. The ribosome is freed to recommence translation, which seems to be the essential function of trans-translation. This Treponema denticola (strain ATCC 35405 / DSM 14222 / CIP 103919 / JCM 8153 / KCTC 15104) protein is SsrA-binding protein.